A 422-amino-acid polypeptide reads, in one-letter code: Keratin, type I cytoskeletal 23 (422 aa).

Over residues 1-24 (MNSSHSFNQTYSASVHSLGSTRGR) the composition is skewed to polar residues. The segment at 1–35 (MNSSHSFNQTYSASVHSLGSTRGRQGSCHRAPSVH) is disordered. Residues 1–71 (MNSSHSFNQT…GRSSPLLGGN (71 aa)) are head. Residues 72–107 (GKATMQNLNDRLATYLEKVRALEEANSKLETRILRW) are coil 1A. One can recognise an IF rod domain in the interval 72 to 382 (GKATMQNLND…RLLEGDTEGT (311 aa)). Residues 108-125 (HQEREPSHRKDYSQYEEN) form a linker 1 region. Residues 126 to 217 (ISRLQEQIVD…KRHEQEMEEN (92 aa)) form a coil 1B region. Residues 218-240 (HLPSDFKVSVKVDTTPGEDLIKV) are linker 12. A coil 2 region spans residues 241-378 (LEDMRQEYEL…ATYRRLLEGD (138 aa)). The interval 379–422 (TEGTMDGSESRLKGSEASTIKAITQESVNGRIVLSQVNEIQKHI) is rod-like helical tail.

It belongs to the intermediate filament family. In terms of assembly, heterotetramer of two type I and two type II keratins.

This Mus musculus (Mouse) protein is Keratin, type I cytoskeletal 23 (Krt23).